Consider the following 306-residue polypeptide: Tyrosine recombinase XerC (306 aa).

A Core-binding (CB) domain is found at 6–92 (NTLYLQTKPY…ALRQWFSYLI (87 aa)). The Tyr recombinase domain occupies 113–292 (RLPKNIDAEQ…DFQHLAKIYD (180 aa)). Active-site residues include Arg-152, Lys-176, His-244, Arg-247, and His-270. Tyr-279 (O-(3'-phospho-DNA)-tyrosine intermediate) is an active-site residue.

This sequence belongs to the 'phage' integrase family. XerC subfamily. In terms of assembly, forms a cyclic heterotetrameric complex composed of two molecules of XerC and two molecules of XerD.

It localises to the cytoplasm. In terms of biological role, site-specific tyrosine recombinase, which acts by catalyzing the cutting and rejoining of the recombining DNA molecules. The XerC-XerD complex is essential to convert dimers of the bacterial chromosome into monomers to permit their segregation at cell division. It also contributes to the segregational stability of plasmids. This is Tyrosine recombinase XerC from Actinobacillus pleuropneumoniae serotype 7 (strain AP76).